Here is a 557-residue protein sequence, read N- to C-terminus: Glucose-6-phosphate isomerase (557 aa).

E361 serves as the catalytic Proton donor. Active-site residues include H392 and K520.

Belongs to the GPI family.

Its subcellular location is the cytoplasm. It catalyses the reaction alpha-D-glucose 6-phosphate = beta-D-fructose 6-phosphate. It functions in the pathway carbohydrate biosynthesis; gluconeogenesis. Its pathway is carbohydrate degradation; glycolysis; D-glyceraldehyde 3-phosphate and glycerone phosphate from D-glucose: step 2/4. In terms of biological role, catalyzes the reversible isomerization of glucose-6-phosphate to fructose-6-phosphate. The chain is Glucose-6-phosphate isomerase from Acinetobacter baylyi (strain ATCC 33305 / BD413 / ADP1).